A 177-amino-acid polypeptide reads, in one-letter code: Biotin-dependent acetyl-/propionyl-coenzyme A carboxylase epsilon subunit (177 aa).

The interval 1–112 is disordered; the sequence is MGTCPCESSE…TEKPLHPHEP (112 aa). Polar residues predominate over residues 18–100; it reads VSGTNEVSDG…SDGNETNNPA (83 aa).

Interacts with the AccA3/AccD5 biotin-dependent acyl-CoA carboxylase complex. Interacts with the AccA3/AccD6 complex. Is also part of the long-chain acyl-CoA carboxylase (LCC) complex, which is composed of AccA3, AccD4, AccD5 and AccE5. The four subunits are essential for activity, but AccD5, together with AccE5, probably plays a structural role rather than a catalytic one.

In terms of biological role, stimulates activity of the AccA3/AccD5 biotin-dependent acyl-CoA carboxylase complex. Interacts with AccD5 and modulates its carboxylase activity for acetyl-CoA and propionyl-CoA. Inhibits activity of the AccA3/AccD6 complex. Is also required for the activity of the long-chain acyl-CoA carboxylase (LCC) complex. This chain is Biotin-dependent acetyl-/propionyl-coenzyme A carboxylase epsilon subunit, found in Mycobacterium tuberculosis (strain ATCC 25618 / H37Rv).